The sequence spans 294 residues: RAB7A-interacting MON1-CCZ1 complex subunit 1 (294 aa).

A2 carries the N-acetylalanine modification.

The protein belongs to the RIMOC1 family. In terms of assembly, interacts with the MON1A-CCZ1B complex. Interacts with GDP-bound RAB7A and promotes its interaction with the MON1A-CCZ1B complex.

The protein localises to the cytoplasm. Its subcellular location is the cytosol. Plays an important role in the removal of damaged mitochondria via mitophagy by controlling the stability and localization of RAB7A. Required for the recruitment of RAB7A and ATG9A vesicles to damaged mitochondria and promotes the stability of RAB7A by inhibiting its proteasomal degradation during mitophagy. The chain is RAB7A-interacting MON1-CCZ1 complex subunit 1 from Mus musculus (Mouse).